The sequence spans 20 residues: Collagenolytic protease 36 kDa A (20 aa).

In terms of domain architecture, Peptidase S1 spans 1-20 (IVGGTEVTPGEIPYQLSLQD). Residues 1–20 (IVGGTEVTPGEIPYQLSLQD) are disordered.

Belongs to the peptidase S1 family.

It catalyses the reaction Hydrolysis of proteins, with broad specificity for peptide bonds. Native collagen is cleaved about 75% of the length of the molecule from the N-terminus. Low activity on small molecule substrates of both trypsin and chymotrypsin.. This enzyme is a serine protease capable of degrading the native triple helix of collagen. The sequence is that of Collagenolytic protease 36 kDa A from Paralithodes camtschaticus (Red king crab).